The following is a 179-amino-acid chain: Translation initiation factor IF-3 (179 aa).

It belongs to the IF-3 family. In terms of assembly, monomer.

It localises to the cytoplasm. Functionally, IF-3 binds to the 30S ribosomal subunit and shifts the equilibrium between 70S ribosomes and their 50S and 30S subunits in favor of the free subunits, thus enhancing the availability of 30S subunits on which protein synthesis initiation begins. This chain is Translation initiation factor IF-3, found in Leptospira interrogans serogroup Icterohaemorrhagiae serovar copenhageni (strain Fiocruz L1-130).